Reading from the N-terminus, the 158-residue chain is Regulator of G-protein signaling 13 (158 aa).

The 117-residue stretch at 34–150 folds into the RGS domain; that stretch reads SLESLMATKY…LKSEMYQQLL (117 aa).

In terms of biological role, inhibits signal transduction by increasing the GTPase activity of G protein alpha subunits thereby driving them into their inactive GDP-bound form. Binds to both G(i)-alpha and G(q)-alpha. The sequence is that of Regulator of G-protein signaling 13 (Rgs13) from Mus musculus (Mouse).